We begin with the raw amino-acid sequence, 101 residues long: Anti-sigma factor RshA (101 aa).

Residues 1 to 20 (MSETEREDERWTPPIGPIDP) form a disordered region. Iron-sulfur cluster is bound by residues Cys-25, His-51, Cys-55, and Cys-58. Thr-96 carries the post-translational modification Phosphothreonine.

It belongs to the zinc-associated anti-sigma factor (ZAS) superfamily. Interacts with cognate ECF RNA polymerase sigma factor SigH under reducing conditions; the complex is disrupted under oxiding conditions or as temperatures rise. Binding inhibits the interaction of SigH with the RNA polymerase catalytic core. Requires iron-sulfur cluster as cofactor. Post-translationally, phosphorylated, probably by PknB. Phosphorylation decreases interaction with SigH, probably leading to increased SigH-mediated transcription.

Functionally, a redox-regulated anti-sigma factor for cognate extracytoplasmic function (ECF) sigma factor SigH. ECF sigma factors are held in an inactive form by an anti-sigma factor. Overexpression leads to increased susceptibility to diamide. In Mycolicibacterium smegmatis (strain ATCC 700084 / mc(2)155) (Mycobacterium smegmatis), this protein is Anti-sigma factor RshA (rshA).